We begin with the raw amino-acid sequence, 370 residues long: 3-dehydroquinate synthase (370 aa).

NAD(+)-binding positions include 108–112 (GVVGD), 132–133 (TT), Lys145, and Lys154. Glu187, His250, and His268 together coordinate Zn(2+).

The protein belongs to the sugar phosphate cyclases superfamily. Dehydroquinate synthase family. Co(2+) serves as cofactor. The cofactor is Zn(2+). Requires NAD(+) as cofactor.

It localises to the cytoplasm. The catalysed reaction is 7-phospho-2-dehydro-3-deoxy-D-arabino-heptonate = 3-dehydroquinate + phosphate. It participates in metabolic intermediate biosynthesis; chorismate biosynthesis; chorismate from D-erythrose 4-phosphate and phosphoenolpyruvate: step 2/7. In terms of biological role, catalyzes the conversion of 3-deoxy-D-arabino-heptulosonate 7-phosphate (DAHP) to dehydroquinate (DHQ). The protein is 3-dehydroquinate synthase of Caulobacter vibrioides (strain NA1000 / CB15N) (Caulobacter crescentus).